The chain runs to 140 residues: Transmembrane protein 107 (140 aa).

2 helical membrane-spanning segments follow: residues 7 to 27 (LVPSRFLTLLAHLVVVITLFW) and 53 to 73 (LVAALSVTLGLFAVELAGFLS). The N-linked (GlcNAc...) asparagine glycan is linked to Asn-79. 2 helical membrane passes run 83–103 (SLISIGAHCSASVALSFFIFE) and 113–133 (IFVFCSALPAVTEMALFVTVF).

Part of the tectonic-like complex (also named B9 complex). Interacts with TMEM237, TMEM231, MKS1 and TMEM216.

Its subcellular location is the membrane. The protein localises to the cell projection. It is found in the cilium. In terms of biological role, plays a role in cilia formation and embryonic patterning. Requires for normal Sonic hedgehog (Shh) signaling in the neural tube and acts in combination with GLI2 and GLI3 to pattern ventral and intermediate neuronal cell types. During ciliogenesis regulates the ciliary transition zone localization of some MKS complex proteins. The protein is Transmembrane protein 107 of Homo sapiens (Human).